The following is a 951-amino-acid chain: 5'-3' exoribonuclease 2 (951 aa).

The CCHC-type zinc-finger motif lies at 262-278 (PCALCNQFGHEVKDCEG). Lys-286 is subject to N6-acetyllysine. The segment at 408–508 (KDDEDSFRRR…SDSEPEPEDN (101 aa)) is disordered. The segment covering 416–426 (RRQKEKRKRMK) has biased composition (basic residues). Phosphothreonine is present on Thr-439. Polar residues-rich tracts occupy residues 445 to 458 (SRNS…SNPR) and 467 to 485 (QRNS…SDGS). A phosphoserine mark is found at Ser-448, Ser-471, Ser-473, Ser-475, Ser-482, Ser-487, Ser-499, Ser-501, and Ser-678. Asymmetric dimethylarginine; alternate occurs at positions 824, 847, and 851. Arg-824, Arg-847, and Arg-851 each carry omega-N-methylarginine; alternate. Residue Arg-880 is modified to Asymmetric dimethylarginine. Asymmetric dimethylarginine; alternate is present on Arg-883. Arg-883 bears the Omega-N-methylarginine; alternate mark. Arg-895 carries the post-translational modification Omega-N-methylarginine. The segment at 907-951 (NQYQMLGGPGGYPPRRDDHRGGRQGYPREGRKYPLPPPSGRYSWN) is disordered. Over residues 920 to 938 (PRRDDHRGGRQGYPREGRK) the composition is skewed to basic and acidic residues. Arg-947 carries the asymmetric dimethylarginine; alternate modification. An Omega-N-methylarginine; alternate modification is found at Arg-947.

The protein belongs to the 5'-3' exonuclease family. XRN2/RAT1 subfamily. As to quaternary structure, interacts with POLR2A and SMN1/SMN2. Interacts with CDKN2AIP and NKRF. Interacts with CDKN2AIPNL; the interaction is direct. Interacts with TRIM71 (via NHL repeats) in an RNA-dependent manner. Interacts with DHX34; the interaction is RNA-independent. In terms of tissue distribution, expressed in the spleen, testis, heart, brain, lung, liver, skeletal muscle, and kidney.

It is found in the nucleus. The protein resides in the nucleolus. In terms of biological role, possesses 5'-&gt;3' exoribonuclease activity. May promote the termination of transcription by RNA polymerase II. During transcription termination, cleavage at the polyadenylation site liberates a 5' fragment which is subsequently processed to form the mature mRNA and a 3' fragment which remains attached to the elongating polymerase. The processive degradation of this 3' fragment by this protein may promote termination of transcription. Binds to RNA polymerase II (RNAp II) transcription termination R-loops formed by G-rich pause sites. This Mus musculus (Mouse) protein is 5'-3' exoribonuclease 2 (Xrn2).